The sequence spans 194 residues: 3-isopropylmalate dehydratase small subunit (194 aa).

This sequence belongs to the LeuD family. LeuD type 1 subfamily. In terms of assembly, heterodimer of LeuC and LeuD.

It carries out the reaction (2R,3S)-3-isopropylmalate = (2S)-2-isopropylmalate. It participates in amino-acid biosynthesis; L-leucine biosynthesis; L-leucine from 3-methyl-2-oxobutanoate: step 2/4. Its function is as follows. Catalyzes the isomerization between 2-isopropylmalate and 3-isopropylmalate, via the formation of 2-isopropylmaleate. In Limosilactobacillus fermentum (strain NBRC 3956 / LMG 18251) (Lactobacillus fermentum), this protein is 3-isopropylmalate dehydratase small subunit.